Reading from the N-terminus, the 278-residue chain is Acetyl-coenzyme A carboxylase carboxyl transferase subunit beta (278 aa).

Residues 23–278 (LWSKCDSCGA…QLIKLLGHMK (256 aa)) enclose the CoA carboxyltransferase N-terminal domain. C27, C30, C46, and C49 together coordinate Zn(2+). The C4-type zinc-finger motif lies at 27–49 (CDSCGAALHKKQLEDHLYTCPHC).

Belongs to the AccD/PCCB family. As to quaternary structure, acetyl-CoA carboxylase is a heterohexamer composed of biotin carboxyl carrier protein (AccB), biotin carboxylase (AccC) and two subunits each of ACCase subunit alpha (AccA) and ACCase subunit beta (AccD). Zn(2+) is required as a cofactor.

It is found in the cytoplasm. It carries out the reaction N(6)-carboxybiotinyl-L-lysyl-[protein] + acetyl-CoA = N(6)-biotinyl-L-lysyl-[protein] + malonyl-CoA. The protein operates within lipid metabolism; malonyl-CoA biosynthesis; malonyl-CoA from acetyl-CoA: step 1/1. Component of the acetyl coenzyme A carboxylase (ACC) complex. Biotin carboxylase (BC) catalyzes the carboxylation of biotin on its carrier protein (BCCP) and then the CO(2) group is transferred by the transcarboxylase to acetyl-CoA to form malonyl-CoA. In Chlorobaculum tepidum (strain ATCC 49652 / DSM 12025 / NBRC 103806 / TLS) (Chlorobium tepidum), this protein is Acetyl-coenzyme A carboxylase carboxyl transferase subunit beta.